The primary structure comprises 418 residues: Inner capsid protein sigma-2 (418 aa).

Belongs to the orthoreovirus sigma-1 protein family. Interacts with protein mu-NS; in viral inclusions.

Its subcellular location is the virion. Inner capsid (core) component. The sequence is that of Inner capsid protein sigma-2 (S2) from Reovirus type 3 (strain Dearing) (T3D).